The following is a 159-amino-acid chain: Phosphopantetheine adenylyltransferase (159 aa).

A substrate-binding site is contributed by serine 9. Residues 9–10 (SF) and histidine 17 contribute to the ATP site. Lysine 41, leucine 74, and lysine 88 together coordinate substrate. Residues 89–91 (GLR), glutamate 99, and 123–129 (YLHLSST) each bind ATP.

Belongs to the bacterial CoaD family. Homohexamer. Mg(2+) serves as cofactor.

It is found in the cytoplasm. The catalysed reaction is (R)-4'-phosphopantetheine + ATP + H(+) = 3'-dephospho-CoA + diphosphate. It functions in the pathway cofactor biosynthesis; coenzyme A biosynthesis; CoA from (R)-pantothenate: step 4/5. Reversibly transfers an adenylyl group from ATP to 4'-phosphopantetheine, yielding dephospho-CoA (dPCoA) and pyrophosphate. This is Phosphopantetheine adenylyltransferase from Arthrobacter sp. (strain FB24).